We begin with the raw amino-acid sequence, 597 residues long: Serine/arginine repetitive matrix protein 3 (597 aa).

Polar residues predominate over residues 1-31 (MSSTVNNGAASMQSTPDAANGFPQPSSSSGT). The disordered stretch occupies residues 1 to 47 (MSSTVNNGAASMQSTPDAANGFPQPSSSSGTWPRAEEELRAAEPGLV). Residues 55-98 (LDHERKRRVELKCMELQEMMEEQGYSEEEIRQKVGTFRQMLMEK) form the CWF21 domain. Over residues 99–109 (EGVLTREDRPG) the composition is skewed to basic and acidic residues. Positions 99–597 (EGVLTREDRP…GPAPLPPPAA (499 aa)) are disordered. 4 stretches are compositionally biased toward basic residues: residues 149–158 (RGHRGYRTKH), 168–186 (PKKK…KKRR), 199–211 (LRKK…KHRR), and 219–243 (RRKR…KKRP). Low complexity-rich tracts occupy residues 257–278 (SGSS…PSRL) and 291–313 (SQRS…SPQR). Composition is skewed to gly residues over residues 315-328 (GGSG…GGRP) and 374-383 (GRGGRAAGGA). The segment covering 384–412 (GRRRRRRRRRRRSRSSASAPRRRGRRRPR) has biased composition (basic residues). Low complexity-rich tracts occupy residues 417 to 433 (RGSS…SDSG), 466 to 476 (RPASTSPSPGA), and 488 to 507 (SSRS…SPSK). The segment covering 530–549 (LSRDKDGEGRARHSEAEATR) has biased composition (basic and acidic residues). Over residues 550–565 (ARRRSRSYSPIRKRRR) the composition is skewed to basic residues.

This sequence belongs to the CWC21 family. In terms of tissue distribution, expressed in breast cancer cell lines.

May play a role in regulating breast cancer cell invasiveness. May be involved in RYBP-mediated breast cancer progression. This chain is Serine/arginine repetitive matrix protein 3 (SRRM3), found in Homo sapiens (Human).